A 359-amino-acid chain; its full sequence is Serine/threonine-protein kinase SAPK7 (359 aa).

Positions 4-260 constitute a Protein kinase domain; sequence YELLKDIGAG…IREIRNHPWF (257 aa). ATP is bound by residues 10–18 and Lys33; that span reads IGAGNFGVA. Catalysis depends on Asp123, which acts as the Proton acceptor. A disordered region spans residues 299–359; sequence EEARTPPRSS…VHASGEFQLS (61 aa). Acidic residues predominate over residues 331–343; sequence EEQEEEEDAEDEY.

It belongs to the protein kinase superfamily. Ser/Thr protein kinase family. May be phosphorylated. In terms of tissue distribution, weakly expressed in roots. Expressed in roots of young seedlings.

It is found in the cytoplasm. The protein resides in the nucleus. The catalysed reaction is L-seryl-[protein] + ATP = O-phospho-L-seryl-[protein] + ADP + H(+). It catalyses the reaction L-threonyl-[protein] + ATP = O-phospho-L-threonyl-[protein] + ADP + H(+). With respect to regulation, activated by hyperosmotic stress. May play a role in signal transduction of hyperosmotic response. The sequence is that of Serine/threonine-protein kinase SAPK7 (SAPK7) from Oryza sativa subsp. japonica (Rice).